A 56-amino-acid chain; its full sequence is Large ribosomal subunit protein eL24 (56 aa).

Residues C6, C9, C32, and C36 each coordinate Zn(2+). The C4-type zinc-finger motif lies at 6–36 (CSFCNTRITPGTGKLYAKKDGTVYYFCSSKC).

Belongs to the eukaryotic ribosomal protein eL24 family. Part of the 50S ribosomal subunit. Forms a cluster with proteins L3 and L14. The cofactor is Zn(2+).

In terms of biological role, binds to the 23S rRNA. The sequence is that of Large ribosomal subunit protein eL24 from Methanothrix thermoacetophila (strain DSM 6194 / JCM 14653 / NBRC 101360 / PT) (Methanosaeta thermophila).